The chain runs to 3080 residues: Protein PIEZO homolog (3080 aa).

6 consecutive transmembrane segments (helical) span residues 28–48 (YIYF…SLIL), 57–77 (PIIT…VNVV), 86–106 (LSVN…WIVF), 113–133 (VIVF…LVYP), 204–224 (YPSI…LLLA), and 232–252 (VMLK…LFVY). N276 carries an N-linked (GlcNAc...) asparagine glycan. The chain crosses the membrane as a helical span at residues 285-305 (WPLVIGYITVLLLYISTCILF). N-linked (GlcNAc...) asparagine glycans are attached at residues N312 and N339. 2 helical membrane passes run 362 to 382 (ILVV…LASG) and 396 to 416 (VIYI…IFNI). Residue N434 is glycosylated (N-linked (GlcNAc...) asparagine). A helical transmembrane segment spans residues 438-458 (WLYIGVQIVVSLTLSLYCFYS). Positions 469-548 (KKDQQSQQSQ…GGGIIRPRKP (80 aa)) are disordered. Over residues 473 to 505 (QSQQSQPQPQQQQQQQQSSQNNQIQQSPLQYQQ) the composition is skewed to low complexity. Over residues 512-532 (ISNKSLPSSPMSTKSTTVHIQ) the composition is skewed to polar residues. N-linked (GlcNAc...) asparagine glycosylation is found at N514, N567, and N606. Helical transmembrane passes span 672–692 (GLTS…VFVI), 700–720 (FWMC…IWQL), and 740–760 (YGSP…FSII). N-linked (GlcNAc...) asparagine glycosylation occurs at N795. Transmembrane regions (helical) follow at residues 827–847 (FCYL…INIV), 849–869 (MATV…SIHI), and 872–892 (FWII…IMQF). Residue N918 is glycosylated (N-linked (GlcNAc...) asparagine). A helical transmembrane segment spans residues 928–948 (LFGCSSILVVCVFQLTVFFSI). An N-linked (GlcNAc...) asparagine glycan is attached at N992. The next 2 membrane-spanning stretches (helical) occupy residues 1036-1056 (FAIS…MIVI) and 1067-1087 (IGSF…AALL). N1109 carries N-linked (GlcNAc...) asparagine glycosylation. Residues 1158–1185 (QQQRKLEEHEEEYEEEEDQFGNKKNNDK) are disordered. The segment covering 1166–1176 (HEEEYEEEEDQ) has biased composition (acidic residues). Residues N1191, N1240, and N1251 are each glycosylated (N-linked (GlcNAc...) asparagine). The tract at residues 1199-1253 (DDGNNNNNNNNNNNNNNNNNNNNNNNNNNNNNNNNNNNNNNNQSNNENNENNNNS) is disordered. Over residues 1202–1252 (NNNNNNNNNNNNNNNNNNNNNNNNNNNNNNNNNNNNNNNQSNNENNENNNN) the composition is skewed to low complexity. 3 helical membrane-spanning segments follow: residues 1281 to 1301 (VLAF…LIII), 1316 to 1336 (IYVS…ILVV), and 1360 to 1380 (LLLL…VLFF). N-linked (GlcNAc...) asparagine glycosylation is found at N1424 and N1440. 2 consecutive transmembrane segments (helical) span residues 1472-1492 (VILI…SCFY) and 1519-1539 (IYNW…ILYF). N-linked (GlcNAc...) asparagine glycosylation is found at N1559 and N1589. Residues 1619 to 1639 (IETGPLSISTISDVIIMVLLA) traverse the membrane as a helical segment. The segment covering 1704-1714 (RINRRKNRHNH) has biased composition (basic residues). Residues 1704–1812 (RINRRKNRHN…NPLSNSSSTV (109 aa)) form a disordered region. Residues 1715–1742 (YYNNNPNNNYNNNNNNNNSNSSNSNNNN) are compositionally biased toward low complexity. Residues N1731, N1734, N1763, N1768, N1771, N1779, N1807, and N1864 are each glycosylated (N-linked (GlcNAc...) asparagine). The segment covering 1762–1782 (KNTTNQNATNSTYSPFANSTM) has biased composition (polar residues). Residues 1789–1812 (NNNNNNNNNNNFNNNPLSNSSSTV) show a composition bias toward low complexity. 2 disordered regions span residues 1873–1899 (LQQE…SSKE) and 1958–2032 (SQLL…TSSS). A compositionally biased stretch (low complexity) spans 1958–2021 (SQLLQQQQQQ…NNNNNNNNNN (64 aa)). N2027 carries an N-linked (GlcNAc...) asparagine glycan. 2 consecutive transmembrane segments (helical) span residues 2078–2098 (IANG…AVFL) and 2112–2132 (FWRF…VFQI). N-linked (GlcNAc...) asparagine glycosylation is present at N2148. Residues 2199 to 2219 (VFGLYIIDGHFISGAFWDLAI) traverse the membrane as a helical segment. The segment at 2277-2367 (LNNSPISLNS…NNNNNNNNNN (91 aa)) is disordered. N-linked (GlcNAc...) asparagine glycosylation is present at N2285. The span at 2288–2367 (NNNNNNNNNN…NNNNNNNNNN (80 aa)) shows a compositional bias: low complexity. Transmembrane regions (helical) follow at residues 2427 to 2447 (IIIY…WLAI) and 2457 to 2477 (YYMP…IFPQ). N2478 carries N-linked (GlcNAc...) asparagine glycosylation. 4 helical membrane-spanning segments follow: residues 2500–2520 (YIVI…IYLY), 2530–2550 (QIVL…DLIV), 2553–2573 (FSFG…IYLY), and 2671–2691 (FVTG…PLII). N-linked (GlcNAc...) asparagine glycans are attached at residues N2762, N2790, N2837, N2840, N2848, N2858, N2908, N2913, and N2935. A disordered region spans residues 2835-2863 (QSNNSNNSNNPNENSSSGSDDNNNNSNNN). Positions 2836–2863 (SNNSNNSNNPNENSSSGSDDNNNNSNNN) are enriched in low complexity. A helical membrane pass occupies residues 2955–2975 (ITSTLVSAGIIGLYVSVVLSV). Residues 3054 to 3080 (PTINSTLNNQNNQNNNNNNNNNHEKIN) are disordered. N-linked (GlcNAc...) asparagine glycosylation occurs at N3057. Residues 3061–3074 (NNQNNQNNNNNNNN) are compositionally biased toward low complexity.

This sequence belongs to the PIEZO (TC 1.A.75) family.

It localises to the membrane. The chain is Protein PIEZO homolog from Dictyostelium discoideum (Social amoeba).